Consider the following 398-residue polypeptide: 1-deoxy-D-xylulose 5-phosphate reductoisomerase (398 aa).

Positions 11, 12, 13, 14, and 125 each coordinate NADPH. 1-deoxy-D-xylulose 5-phosphate is bound at residue Lys126. Glu127 contributes to the NADPH binding site. Asp151 lines the Mn(2+) pocket. 1-deoxy-D-xylulose 5-phosphate-binding residues include Ser152, Glu153, Ser186, and His209. Glu153 provides a ligand contact to Mn(2+). NADPH is bound at residue Gly215. Ser222, Asn227, Lys228, and Glu231 together coordinate 1-deoxy-D-xylulose 5-phosphate. Residue Glu231 participates in Mn(2+) binding.

It belongs to the DXR family. Requires Mg(2+) as cofactor. It depends on Mn(2+) as a cofactor.

It carries out the reaction 2-C-methyl-D-erythritol 4-phosphate + NADP(+) = 1-deoxy-D-xylulose 5-phosphate + NADPH + H(+). It participates in isoprenoid biosynthesis; isopentenyl diphosphate biosynthesis via DXP pathway; isopentenyl diphosphate from 1-deoxy-D-xylulose 5-phosphate: step 1/6. Catalyzes the NADPH-dependent rearrangement and reduction of 1-deoxy-D-xylulose-5-phosphate (DXP) to 2-C-methyl-D-erythritol 4-phosphate (MEP). The sequence is that of 1-deoxy-D-xylulose 5-phosphate reductoisomerase from Acinetobacter baumannii (strain AB307-0294).